The chain runs to 343 residues: Sulfate/thiosulfate import ATP-binding protein CysA (343 aa).

Residues 3–237 (IRISHLRKQF…PASPFVYSFV (235 aa)) form the ABC transporter domain. Position 35–42 (35–42 (GPSGSGKT)) interacts with ATP.

This sequence belongs to the ABC transporter superfamily. Sulfate/tungstate importer (TC 3.A.1.6) family. The complex is composed of two ATP-binding proteins (CysA), two transmembrane proteins (CysT and CysW) and a solute-binding protein (CysP).

It is found in the cell inner membrane. The enzyme catalyses sulfate(out) + ATP + H2O = sulfate(in) + ADP + phosphate + H(+). It catalyses the reaction thiosulfate(out) + ATP + H2O = thiosulfate(in) + ADP + phosphate + H(+). Functionally, part of the ABC transporter complex CysAWTP involved in sulfate/thiosulfate import. Responsible for energy coupling to the transport system. The sequence is that of Sulfate/thiosulfate import ATP-binding protein CysA from Xanthomonas campestris pv. campestris (strain ATCC 33913 / DSM 3586 / NCPPB 528 / LMG 568 / P 25).